The following is a 364-amino-acid chain: FNIP repeat-containing protein DDB_G0277323 (364 aa).

5 FNIP repeats span residues 57 to 98 (MNIE…DLKY), 155 to 198 (YDCL…FGWT), 214 to 244 (LRVLKFGVSFNTEIQCNVLPNSIEKITFGSS), 245 to 271 (FNQVILPNSLPRNLRILKFGSSFNQPI), and 295 to 340 (FNQP…FINN).

In Dictyostelium discoideum (Social amoeba), this protein is FNIP repeat-containing protein DDB_G0277323.